A 185-amino-acid polypeptide reads, in one-letter code: Elongation factor P (185 aa).

This sequence belongs to the elongation factor P family.

Its subcellular location is the cytoplasm. It functions in the pathway protein biosynthesis; polypeptide chain elongation. In terms of biological role, involved in peptide bond synthesis. Stimulates efficient translation and peptide-bond synthesis on native or reconstituted 70S ribosomes in vitro. Probably functions indirectly by altering the affinity of the ribosome for aminoacyl-tRNA, thus increasing their reactivity as acceptors for peptidyl transferase. In Oceanobacillus iheyensis (strain DSM 14371 / CIP 107618 / JCM 11309 / KCTC 3954 / HTE831), this protein is Elongation factor P.